A 268-amino-acid chain; its full sequence is Centromere protein Q (268 aa).

The segment at Met-1 to Thr-80 is disordered. A phosphoserine mark is found at Ser-31 and Ser-50. The span at Thr-58–Thr-72 shows a compositional bias: basic residues. Residues Glu-170–Ser-206 adopt a coiled-coil conformation. Ser-249 bears the Phosphoserine mark.

This sequence belongs to the CENP-Q/OKP1 family. In terms of assembly, component of the CENPA-CAD complex, composed of CENPI, CENPK, CENPL, CENPO, CENPP, CENPQ, CENPR and CENPS. The CENPA-CAD complex interacts with the CENPA-NAC complex, at least composed of CENPA, CENPC, CENPH, CENPM, CENPN, CENPT and CENPU. Phosphorylation at Ser-50 is essential for CENPE recruitment to kinetochores and orderly chromosome congression.

It is found in the nucleus. The protein localises to the chromosome. The protein resides in the centromere. Component of the CENPA-CAD (nucleosome distal) complex, a complex recruited to centromeres which is involved in assembly of kinetochore proteins, mitotic progression and chromosome segregation. May be involved in incorporation of newly synthesized CENPA into centromeres via its interaction with the CENPA-NAC complex. Plays an important role in chromosome congression and in the recruitment of CENP-O complex (which comprises CENPO, CENPP, CENPQ and CENPU), CENPE and PLK1 to the kinetochores. The chain is Centromere protein Q (CENPQ) from Homo sapiens (Human).